Here is a 268-residue protein sequence, read N- to C-terminus: Tryptophan synthase alpha chain (268 aa).

Active-site proton acceptor residues include Glu-47 and Asp-58.

Belongs to the TrpA family. In terms of assembly, tetramer of two alpha and two beta chains.

It localises to the plastid. Its subcellular location is the chloroplast. The enzyme catalyses (1S,2R)-1-C-(indol-3-yl)glycerol 3-phosphate + L-serine = D-glyceraldehyde 3-phosphate + L-tryptophan + H2O. It functions in the pathway amino-acid biosynthesis; L-tryptophan biosynthesis; L-tryptophan from chorismate: step 5/5. In terms of biological role, the alpha subunit is responsible for the aldol cleavage of indoleglycerol phosphate to indole and glyceraldehyde 3-phosphate. The sequence is that of Tryptophan synthase alpha chain from Gracilaria tenuistipitata var. liui (Red alga).